The primary structure comprises 1428 residues: uncharacterized protein (1428 aa).

Disordered regions lie at residues 1–53 (MAKK…AFKV), 249–274 (DIKH…KDSK), and 377–413 (KNGI…ETRA). Polar residues predominate over residues 16–33 (ATTSIPSRSASSPANKNQ). Positions 34–51 (VKGEKNNKTQKVEPKNAF) are enriched in basic and acidic residues. Polar residues predominate over residues 256-265 (KETQPSNQVD). Positions 641–811 (IDAVNNSQLL…FEGSNLITIP (171 aa)) constitute a Helicase ATP-binding domain. 654–661 (GDTGCGKS) contacts ATP. The short motif at 758-761 (DEVH) is the DEAH box element. Positions 886-1064 (LIVYLLKYIF…EVVLRVKMCQ (179 aa)) constitute a Helicase C-terminal domain.

The protein belongs to the helicase family. SKI2 subfamily.

It is found in the cytoplasm. This is an uncharacterized protein from Schizosaccharomyces pombe (strain 972 / ATCC 24843) (Fission yeast).